A 582-amino-acid chain; its full sequence is Membrane protein insertase YidC (582 aa).

The chain crosses the membrane as a helical span at residues 3–23; the sequence is IQRALVITGIAVVSYLMIQAW. Residues 38-92 are disordered; sequence QVAEQGNSSSSDSADLPSVQSQTDNSIPSAQSDNDLPSVSPADIAQPTPSSQRIE. Residues 45 to 58 show a composition bias toward low complexity; the sequence is SSSSDSADLPSVQS. The span at 59–74 shows a compositional bias: polar residues; the sequence is QTDNSIPSAQSDNDLP. 5 helical membrane-spanning segments follow: residues 357 to 377, 394 to 414, 464 to 484, 495 to 515, and 541 to 561; these read TVDY…LVFL, GVGN…AIFF, LGGC…YYVL, FFLW…PILM, and MPMI…LYWL.

It belongs to the OXA1/ALB3/YidC family. Type 1 subfamily. As to quaternary structure, interacts with the Sec translocase complex via SecD. Specifically interacts with transmembrane segments of nascent integral membrane proteins during membrane integration.

The protein resides in the cell inner membrane. Its function is as follows. Required for the insertion and/or proper folding and/or complex formation of integral membrane proteins into the membrane. Involved in integration of membrane proteins that insert both dependently and independently of the Sec translocase complex, as well as at least some lipoproteins. Aids folding of multispanning membrane proteins. The chain is Membrane protein insertase YidC from Alcanivorax borkumensis (strain ATCC 700651 / DSM 11573 / NCIMB 13689 / SK2).